We begin with the raw amino-acid sequence, 144 residues long: Maximins 3/H9 type 2 (144 aa).

Residues 1 to 18 form the signal peptide; sequence MNFKYIVAVSFLIASAYA. 2 consecutive propeptides follow at residues 19–43 and 74–123; these read RSVQNDEQSLSQRDVLEEESLREIR and TAEE…KEKR. Ile-143 is modified (isoleucine amide).

The protein belongs to the bombinin family. In terms of tissue distribution, expressed by the skin glands.

The protein localises to the secreted. In terms of biological role, maximin-3 shows antibacterial activity against both Gram-positive and Gram-negative bacteria. It also shows antimicrobial activity against the fungus C.albicans, but not against A.flavus nor P.uticale. It has little hemolytic activity. It possess a significant cytotoxicity against tumor cell lines. It possess a significant anti-HIV activity. It shows high spermicidal activity. Its function is as follows. Maximin-H9 shows antimicrobial activity against bacteria and against the fungus C.albicans. Shows strong hemolytic activity. The chain is Maximins 3/H9 type 2 from Bombina maxima (Giant fire-bellied toad).